A 267-amino-acid chain; its full sequence is Hydroxynaphthalene reductase-like protein Arp2 (267 aa).

I25, N45, D71, and N98 together coordinate NADP(+). Residues S147 and S148 each act as proton donor in the active site. 4 residues coordinate NADP(+): Y162, K166, V195, and T197. The Proton acceptor role is filled by Y162. Catalysis depends on K166, which acts as the Lowers pKa of active site Tyr.

Belongs to the short-chain dehydrogenases/reductases (SDR) family.

Hydroxynaphthalene reductase-like protein; part of the Pks2 gene cluster that mediates the formation of infectious structures (appressoria), enabling these fungi to kill insects faster. The product of the Pks2 gene cluster is different from the one of Pks1 and has still not been identified. In Metarhizium robertsii (strain ARSEF 23 / ATCC MYA-3075) (Metarhizium anisopliae (strain ARSEF 23)), this protein is Hydroxynaphthalene reductase-like protein Arp2.